A 356-amino-acid polypeptide reads, in one-letter code: Heat-inducible transcription repressor HrcA (356 aa).

This sequence belongs to the HrcA family.

Its function is as follows. Negative regulator of class I heat shock genes (grpE-dnaK-dnaJ and groELS operons). Prevents heat-shock induction of these operons. The polypeptide is Heat-inducible transcription repressor HrcA (Chelativorans sp. (strain BNC1)).